A 366-amino-acid polypeptide reads, in one-letter code: DNA replication and repair protein RecF (366 aa).

30–37 is an ATP binding site; it reads GRNAQGKT.

Belongs to the RecF family.

The protein resides in the cytoplasm. The RecF protein is involved in DNA metabolism; it is required for DNA replication and normal SOS inducibility. RecF binds preferentially to single-stranded, linear DNA. It also seems to bind ATP. In Streptococcus thermophilus (strain CNRZ 1066), this protein is DNA replication and repair protein RecF.